The following is a 380-amino-acid chain: Putative T-box protein 40 (380 aa).

The segment at residues Met11 to Asp192 is a DNA-binding region (T-box). The tract at residues Glu188–Thr215 is disordered. Residues Asn189–Thr215 show a composition bias toward basic and acidic residues.

It localises to the nucleus. This is Putative T-box protein 40 (tbx-40) from Caenorhabditis elegans.